A 400-amino-acid polypeptide reads, in one-letter code: Argininosuccinate synthase (400 aa).

8–16 (AYSGGLDTS) is a binding site for ATP. L-citrulline-binding residues include Tyr-86 and Ser-91. Gly-116 provides a ligand contact to ATP. 3 residues coordinate L-aspartate: Thr-118, Asn-122, and Asp-123. Asn-122 serves as a coordination point for L-citrulline. The L-citrulline site is built by Arg-126, Ser-175, Ser-184, Glu-260, and Tyr-272.

The protein belongs to the argininosuccinate synthase family. Type 1 subfamily. Homotetramer.

The protein resides in the cytoplasm. The enzyme catalyses L-citrulline + L-aspartate + ATP = 2-(N(omega)-L-arginino)succinate + AMP + diphosphate + H(+). The protein operates within amino-acid biosynthesis; L-arginine biosynthesis; L-arginine from L-ornithine and carbamoyl phosphate: step 2/3. The chain is Argininosuccinate synthase from Clostridium acetobutylicum (strain ATCC 824 / DSM 792 / JCM 1419 / IAM 19013 / LMG 5710 / NBRC 13948 / NRRL B-527 / VKM B-1787 / 2291 / W).